Consider the following 744-residue polypeptide: Phosphoribosylformylglycinamidine synthase subunit PurL (744 aa).

His-49 is a catalytic residue. 2 residues coordinate ATP: Tyr-52 and Lys-91. Residue Glu-93 coordinates Mg(2+). Substrate is bound by residues 94–97 (SHNH) and Arg-116. His-95 functions as the Proton acceptor in the catalytic mechanism. Residue Asp-117 coordinates Mg(2+). A substrate-binding site is contributed by Gln-240. Asp-268 contributes to the Mg(2+) binding site. Residue 312–314 (ESQ) participates in substrate binding. ATP contacts are provided by Asp-493 and Gly-530. Asn-531 is a binding site for Mg(2+). Substrate is bound at residue Ser-533.

This sequence belongs to the FGAMS family. In terms of assembly, monomer. Part of the FGAM synthase complex composed of 1 PurL, 1 PurQ and 2 PurS subunits.

It localises to the cytoplasm. It catalyses the reaction N(2)-formyl-N(1)-(5-phospho-beta-D-ribosyl)glycinamide + L-glutamine + ATP + H2O = 2-formamido-N(1)-(5-O-phospho-beta-D-ribosyl)acetamidine + L-glutamate + ADP + phosphate + H(+). It functions in the pathway purine metabolism; IMP biosynthesis via de novo pathway; 5-amino-1-(5-phospho-D-ribosyl)imidazole from N(2)-formyl-N(1)-(5-phospho-D-ribosyl)glycinamide: step 1/2. In terms of biological role, part of the phosphoribosylformylglycinamidine synthase complex involved in the purines biosynthetic pathway. Catalyzes the ATP-dependent conversion of formylglycinamide ribonucleotide (FGAR) and glutamine to yield formylglycinamidine ribonucleotide (FGAM) and glutamate. The FGAM synthase complex is composed of three subunits. PurQ produces an ammonia molecule by converting glutamine to glutamate. PurL transfers the ammonia molecule to FGAR to form FGAM in an ATP-dependent manner. PurS interacts with PurQ and PurL and is thought to assist in the transfer of the ammonia molecule from PurQ to PurL. In Nitrobacter hamburgensis (strain DSM 10229 / NCIMB 13809 / X14), this protein is Phosphoribosylformylglycinamidine synthase subunit PurL.